The primary structure comprises 997 residues: Phosphoenolpyruvate carboxylase (997 aa).

The interval 1-67 (MKSSGSARTA…KPAARTREDK (67 aa)) is disordered. Catalysis depends on residues histidine 207 and lysine 649.

Belongs to the PEPCase type 1 family. The cofactor is Mg(2+).

It catalyses the reaction oxaloacetate + phosphate = phosphoenolpyruvate + hydrogencarbonate. Functionally, forms oxaloacetate, a four-carbon dicarboxylic acid source for the tricarboxylic acid cycle. This chain is Phosphoenolpyruvate carboxylase, found in Burkholderia vietnamiensis (strain G4 / LMG 22486) (Burkholderia cepacia (strain R1808)).